The sequence spans 258 residues: Aspartate/glutamate leucyltransferase (258 aa).

This sequence belongs to the R-transferase family. Bpt subfamily.

The protein localises to the cytoplasm. It carries out the reaction N-terminal L-glutamyl-[protein] + L-leucyl-tRNA(Leu) = N-terminal L-leucyl-L-glutamyl-[protein] + tRNA(Leu) + H(+). The catalysed reaction is N-terminal L-aspartyl-[protein] + L-leucyl-tRNA(Leu) = N-terminal L-leucyl-L-aspartyl-[protein] + tRNA(Leu) + H(+). Its function is as follows. Functions in the N-end rule pathway of protein degradation where it conjugates Leu from its aminoacyl-tRNA to the N-termini of proteins containing an N-terminal aspartate or glutamate. The polypeptide is Aspartate/glutamate leucyltransferase (Bradyrhizobium diazoefficiens (strain JCM 10833 / BCRC 13528 / IAM 13628 / NBRC 14792 / USDA 110)).